The following is a 169-amino-acid chain: NADH-quinone oxidoreductase subunit B (169 aa).

Residues cysteine 42, cysteine 43, cysteine 107, and cysteine 136 each coordinate [4Fe-4S] cluster.

Belongs to the complex I 20 kDa subunit family. NDH-1 is composed of 14 different subunits. Subunits NuoB, C, D, E, F, and G constitute the peripheral sector of the complex. [4Fe-4S] cluster serves as cofactor.

Its subcellular location is the cell inner membrane. It catalyses the reaction a quinone + NADH + 5 H(+)(in) = a quinol + NAD(+) + 4 H(+)(out). Its function is as follows. NDH-1 shuttles electrons from NADH, via FMN and iron-sulfur (Fe-S) centers, to quinones in the respiratory chain. The immediate electron acceptor for the enzyme in this species is believed to be ubiquinone. Couples the redox reaction to proton translocation (for every two electrons transferred, four hydrogen ions are translocated across the cytoplasmic membrane), and thus conserves the redox energy in a proton gradient. In Helicobacter hepaticus (strain ATCC 51449 / 3B1), this protein is NADH-quinone oxidoreductase subunit B.